The sequence spans 376 residues: Erythronate-4-phosphate dehydrogenase (376 aa).

Positions 45 and 67 each coordinate substrate. Asp147 contributes to the NAD(+) binding site. Arg209 is an active-site residue. Asp233 serves as a coordination point for NAD(+). Glu238 is a catalytic residue. His255 (proton donor) is an active-site residue. Gly258 contacts NAD(+). Tyr259 contributes to the substrate binding site.

The protein belongs to the D-isomer specific 2-hydroxyacid dehydrogenase family. PdxB subfamily. As to quaternary structure, homodimer.

Its subcellular location is the cytoplasm. The enzyme catalyses 4-phospho-D-erythronate + NAD(+) = (R)-3-hydroxy-2-oxo-4-phosphooxybutanoate + NADH + H(+). The protein operates within cofactor biosynthesis; pyridoxine 5'-phosphate biosynthesis; pyridoxine 5'-phosphate from D-erythrose 4-phosphate: step 2/5. Its function is as follows. Catalyzes the oxidation of erythronate-4-phosphate to 3-hydroxy-2-oxo-4-phosphonooxybutanoate. This is Erythronate-4-phosphate dehydrogenase from Shewanella baltica (strain OS185).